Here is a 446-residue protein sequence, read N- to C-terminus: Adenylosuccinate synthetase (446 aa).

GTP contacts are provided by residues 21–27 (GDEGKGK) and 49–51 (GHT). Asp22 serves as the catalytic Proton acceptor. Residues Asp22 and Gly49 each contribute to the Mg(2+) site. Residues 22-25 (DEGK), 47-50 (NAGH), Thr141, Arg155, Gln236, Thr251, and Arg319 contribute to the IMP site. Residue His50 is the Proton donor of the active site. 315-321 (VTTGRSR) is a substrate binding site. Residues Arg321, 347 to 349 (KLD), and 429 to 431 (STS) each bind GTP.

Belongs to the adenylosuccinate synthetase family. As to quaternary structure, homodimer. Mg(2+) serves as cofactor.

The protein localises to the cytoplasm. It carries out the reaction IMP + L-aspartate + GTP = N(6)-(1,2-dicarboxyethyl)-AMP + GDP + phosphate + 2 H(+). It participates in purine metabolism; AMP biosynthesis via de novo pathway; AMP from IMP: step 1/2. Its function is as follows. Plays an important role in the de novo pathway of purine nucleotide biosynthesis. Catalyzes the first committed step in the biosynthesis of AMP from IMP. The chain is Adenylosuccinate synthetase from Polaromonas sp. (strain JS666 / ATCC BAA-500).